The chain runs to 626 residues: Two-component response regulator ORR24 (626 aa).

The disordered stretch occupies residues 1-22 (MTVEERQGRVGGHGVSGGGGGR). Gly residues predominate over residues 9-22 (RVGGHGVSGGGGGR). Positions 30-145 (RVLAVDDDPT…QLRTIWQHVI (116 aa)) constitute a Response regulatory domain. Aspartate 81 is subject to 4-aspartylphosphate. The segment covering 151–162 (DAKNRGNDDDAG) has biased composition (basic and acidic residues). 2 disordered regions span residues 151 to 215 (DAKN…KKPR) and 400 to 440 (LQPL…RTTN). Acidic residues predominate over residues 191–202 (NGDDGDDSDENS). Residues 210 to 269 (TQKKPRVVWSVELHRKFVAAVNQLGIEKAVPKKILDLMNVENITRENVASHLQKYRLYLK) constitute a DNA-binding region (myb-like GARP). A compositionally biased stretch (polar residues) spans 400–421 (LQPLESSSQQHLSRVHSSSADP).

This sequence belongs to the ARR family. Type-B subfamily. Two-component system major event consists of a His-to-Asp phosphorelay between a sensor histidine kinase (HK) and a response regulator (RR). In plants, the His-to-Asp phosphorelay involves an additional intermediate named Histidine-containing phosphotransfer protein (HPt). This multistep phosphorelay consists of a His-Asp-His-Asp sequential transfer of a phosphate group between first a His and an Asp of the HK protein, followed by the transfer to a conserved His of the HPt protein and finally the transfer to an Asp in the receiver domain of the RR protein.

Its subcellular location is the nucleus. In terms of biological role, transcriptional activator that binds specific DNA sequence. Functions as a response regulator involved in His-to-Asp phosphorelay signal transduction system. Phosphorylation of the Asp residue in the receiver domain activates the ability of the protein to promote the transcription of target genes. May directly activate some type-A response regulators in response to cytokinins. This is Two-component response regulator ORR24 from Oryza sativa subsp. indica (Rice).